A 572-amino-acid polypeptide reads, in one-letter code: Phosphoenolpyruvate-protein phosphotransferase (572 aa).

The active-site Tele-phosphohistidine intermediate is the H191. Positions 298 and 334 each coordinate phosphoenolpyruvate. Mg(2+) is bound by residues E433 and D457. Residues 456–457 and R467 each bind phosphoenolpyruvate; that span reads ND. Catalysis depends on C504, which acts as the Proton donor.

It belongs to the PEP-utilizing enzyme family. As to quaternary structure, homodimer. Requires Mg(2+) as cofactor.

It is found in the cytoplasm. It catalyses the reaction L-histidyl-[protein] + phosphoenolpyruvate = N(pros)-phospho-L-histidyl-[protein] + pyruvate. Functionally, general (non sugar-specific) component of the phosphoenolpyruvate-dependent sugar phosphotransferase system (sugar PTS). This major carbohydrate active-transport system catalyzes the phosphorylation of incoming sugar substrates concomitantly with their translocation across the cell membrane. Enzyme I transfers the phosphoryl group from phosphoenolpyruvate (PEP) to the phosphoryl carrier protein (HPr). This Staphylococcus aureus (strain MSSA476) protein is Phosphoenolpyruvate-protein phosphotransferase.